Reading from the N-terminus, the 292-residue chain is Homoserine kinase (292 aa).

81-91 (RPRSGLGSSGA) is an ATP binding site.

The protein belongs to the GHMP kinase family. Homoserine kinase subfamily.

Its subcellular location is the cytoplasm. It carries out the reaction L-homoserine + ATP = O-phospho-L-homoserine + ADP + H(+). It functions in the pathway amino-acid biosynthesis; L-threonine biosynthesis; L-threonine from L-aspartate: step 4/5. Catalyzes the ATP-dependent phosphorylation of L-homoserine to L-homoserine phosphate. This is Homoserine kinase from Thermococcus gammatolerans (strain DSM 15229 / JCM 11827 / EJ3).